A 477-amino-acid polypeptide reads, in one-letter code: Glycogen synthase (477 aa).

Lysine 15 provides a ligand contact to ADP-alpha-D-glucose.

The protein belongs to the glycosyltransferase 1 family. Bacterial/plant glycogen synthase subfamily.

The enzyme catalyses [(1-&gt;4)-alpha-D-glucosyl](n) + ADP-alpha-D-glucose = [(1-&gt;4)-alpha-D-glucosyl](n+1) + ADP + H(+). It participates in glycan biosynthesis; glycogen biosynthesis. Synthesizes alpha-1,4-glucan chains using ADP-glucose. This is Glycogen synthase from Shigella flexneri.